The primary structure comprises 130 residues: Abscisic acid and environmental stress-inducible protein TAS14 (130 aa).

A disordered region spans residues 1–130 (MAQYGNQDQM…KIKDKIPGMH (130 aa)). Gly residues predominate over residues 27 to 58 (QGTGTGGMMGGTGTGGMMGGTGGEYGTQGMGT). Basic and acidic residues-rich tracts occupy residues 61 to 73 (HHHE…RRSD) and 92 to 130 (KEKI…PGMH).

The protein belongs to the plant dehydrin family.

The chain is Abscisic acid and environmental stress-inducible protein TAS14 (TAS14) from Solanum lycopersicum (Tomato).